The primary structure comprises 452 residues: uncharacterized protein (452 aa).

The next 14 membrane-spanning stretches (helical) occupy residues 8–28 (AVFLTAVASGTMLNPLNSSMI), 39–59 (FHLSFTTVSWLISSFYLASAV), 77–97 (FLFGLILVAVSAIGAPFAPTF), 100–122 (LLVMRLFQSVGSSAIYPSGVGLI), 134–156 (LAVLSIFASAMTALGPTAGGFLI), 161–183 (WPAIFIVNLPFIILSFLLGLYMF), 203–222 (LGIVLFAGGIIFLLSFLLSF), 226–243 (PHAVEGVLGLLLLCAFVW), 266–286 (AVYVQFILLNVFFYCLFFGLP), 302–322 (LFMLFMSGMSIVVSPLTGKWI), 330–350 (PIFAGALLMTAGAVLLTIFFI), 359–379 (LILSLLGIGYGLGNVALQAAM), 393–415 (GLFQTCRYLGSILSSVILGILFG), and 425–447 (MMGIIMIIAGGASLLMAVRFAAL).

The protein belongs to the major facilitator superfamily.

It localises to the cell membrane. This is an uncharacterized protein from Bacillus subtilis (strain 168).